Here is a 528-residue protein sequence, read N- to C-terminus: Calcium-dependent protein kinase 13 (528 aa).

G2 is lipidated: N-myristoyl glycine. Over residues 17-32 (KSNYSGHDHARKDAAG) the composition is skewed to basic and acidic residues. Residues 17-37 (KSNYSGHDHARKDAAGGKKSA) form a disordered region. Position 43 is a phosphoserine (S43). A Protein kinase domain is found at 54–312 (YLLDRELGRG…AKQVLEHPWI (259 aa)). Residues 60–68 (LGRGEFGVT) and K83 contribute to the ATP site. Catalysis depends on D178, which acts as the Proton acceptor. S218 carries the post-translational modification Phosphoserine. The interval 318 to 348 (APNVPLGDVVKSRLKQFSVMNRFKRKALRVI) is autoinhibitory domain. EF-hand domains are found at residues 355 to 390 (EEVE…FSTQ), 391 to 426 (LAES…LQKV), 427 to 462 (ANDE…DGGD), and 463 to 498 (DCVD…GTDW). Positions 368, 370, 372, 379, 404, 410, 415, 440, 442, 444, 446, 451, 476, 478, 480, and 482 each coordinate Ca(2+). A Phosphoserine modification is found at S484. A Ca(2+)-binding site is contributed by E487. A Phosphoserine modification is found at S522.

It belongs to the protein kinase superfamily. Ser/Thr protein kinase family. CDPK subfamily.

Its subcellular location is the cell membrane. The catalysed reaction is L-seryl-[protein] + ATP = O-phospho-L-seryl-[protein] + ADP + H(+). The enzyme catalyses L-threonyl-[protein] + ATP = O-phospho-L-threonyl-[protein] + ADP + H(+). Its activity is regulated as follows. Activated by calcium. Autophosphorylation may play an important role in the regulation of the kinase activity. May play a role in signal transduction pathways that involve calcium as a second messenger. This chain is Calcium-dependent protein kinase 13 (CPK13), found in Arabidopsis thaliana (Mouse-ear cress).